A 292-amino-acid chain; its full sequence is 2-dehydro-3-deoxygalactonokinase (292 aa).

This sequence belongs to the DgoK family.

It carries out the reaction 2-dehydro-3-deoxy-D-galactonate + ATP = 2-dehydro-3-deoxy-6-phospho-D-galactonate + ADP + H(+). It participates in carbohydrate acid metabolism; D-galactonate degradation; D-glyceraldehyde 3-phosphate and pyruvate from D-galactonate: step 2/3. This is 2-dehydro-3-deoxygalactonokinase (dgoK) from Escherichia coli (strain K12).